We begin with the raw amino-acid sequence, 108 residues long: Nucleoid-associated protein Bcen_6253 (108 aa).

A compositionally biased stretch (polar residues) spans 85-95 (ATSQEKMSGMT). The tract at residues 85–108 (ATSQEKMSGMTSGLPLPPGFKLPF) is disordered. The span at 99–108 (PLPPGFKLPF) shows a compositional bias: pro residues.

Belongs to the YbaB/EbfC family. Homodimer.

Its subcellular location is the cytoplasm. It is found in the nucleoid. In terms of biological role, binds to DNA and alters its conformation. May be involved in regulation of gene expression, nucleoid organization and DNA protection. This Burkholderia orbicola (strain AU 1054) protein is Nucleoid-associated protein Bcen_6253.